The following is a 453-amino-acid chain: Cytochrome b-c1 complex subunit 2, mitochondrial (453 aa).

Residues 1–14 (MKLLTRAGSLSRFY) constitute a mitochondrion transit peptide. Residues K66, K199, and K250 each carry the N6-acetyllysine modification.

It belongs to the peptidase M16 family. UQCRC2/QCR2 subfamily. As to quaternary structure, component of the ubiquinol-cytochrome c oxidoreductase (cytochrome b-c1 complex, complex III, CIII), a multisubunit enzyme composed of 11 subunits. The complex is composed of 3 respiratory subunits cytochrome b, cytochrome c1 and Rieske protein UQCRFS1, 2 core protein subunits UQCRC1/QCR1 and UQCRC2/QCR2, and 6 low-molecular weight protein subunits UQCRH/QCR6, UQCRB/QCR7, UQCRQ/QCR8, UQCR10/QCR9, UQCR11/QCR10 and subunit 9, the cleavage product of Rieske protein UQCRFS1. The complex exists as an obligatory dimer and forms supercomplexes (SCs) in the inner mitochondrial membrane with NADH-ubiquinone oxidoreductase (complex I, CI) and cytochrome c oxidase (complex IV, CIV), resulting in different assemblies (supercomplex SCI(1)III(2)IV(1) and megacomplex MCI(2)III(2)IV(2)). Interacts with RAB5IF. Interacts with STMP1.

Its subcellular location is the mitochondrion inner membrane. In terms of biological role, component of the ubiquinol-cytochrome c oxidoreductase, a multisubunit transmembrane complex that is part of the mitochondrial electron transport chain which drives oxidative phosphorylation. The respiratory chain contains 3 multisubunit complexes succinate dehydrogenase (complex II, CII), ubiquinol-cytochrome c oxidoreductase (cytochrome b-c1 complex, complex III, CIII) and cytochrome c oxidase (complex IV, CIV), that cooperate to transfer electrons derived from NADH and succinate to molecular oxygen, creating an electrochemical gradient over the inner membrane that drives transmembrane transport and the ATP synthase. The cytochrome b-c1 complex catalyzes electron transfer from ubiquinol to cytochrome c, linking this redox reaction to translocation of protons across the mitochondrial inner membrane, with protons being carried across the membrane as hydrogens on the quinol. In the process called Q cycle, 2 protons are consumed from the matrix, 4 protons are released into the intermembrane space and 2 electrons are passed to cytochrome c. The 2 core subunits UQCRC1/QCR1 and UQCRC2/QCR2 are homologous to the 2 mitochondrial-processing peptidase (MPP) subunits beta-MPP and alpha-MPP respectively, and they seem to have preserved their MPP processing properties. May be involved in the in situ processing of UQCRFS1 into the mature Rieske protein and its mitochondrial targeting sequence (MTS)/subunit 9 when incorporated into complex III. This chain is Cytochrome b-c1 complex subunit 2, mitochondrial (UQCRC2), found in Bos taurus (Bovine).